The chain runs to 202 residues: Probable cytochrome c oxidase subunit 3 (202 aa).

5 consecutive transmembrane segments (helical) span residues 30-50 (VVWL…YFTA), 69-89 (AVPV…GVFS), 101-121 (WYVI…YEYY), 141-161 (LATG…IFLL), and 178-198 (IVVS…FTVI).

Belongs to the cytochrome c oxidase subunit 3 family.

The protein localises to the cell membrane. It catalyses the reaction 4 Fe(II)-[cytochrome c] + O2 + 8 H(+)(in) = 4 Fe(III)-[cytochrome c] + 2 H2O + 4 H(+)(out). The sequence is that of Probable cytochrome c oxidase subunit 3 (ctaE) from Mycobacterium leprae (strain TN).